Reading from the N-terminus, the 213-residue chain is Adenylate kinase (213 aa).

10–15 (GAGKGT) contacts ATP. An NMP region spans residues 30–59 (STGDIFRANIKNNTELGQKAKTYMDKGELV). Residues Thr-31, Arg-36, 57 to 59 (ELV), 85 to 88 (GFPR), and Gln-92 contribute to the AMP site. An LID region spans residues 126–163 (GRRACVGCGATYHIQFNPTKVEGICDACGEKLILRDDD). Arg-127 provides a ligand contact to ATP. Zn(2+) is bound by residues Cys-130 and Cys-133. 136–137 (TY) is an ATP binding site. Zn(2+) is bound by residues Cys-150 and Cys-153. 2 residues coordinate AMP: Arg-160 and Arg-171. Gln-199 is an ATP binding site.

It belongs to the adenylate kinase family. As to quaternary structure, monomer.

The protein localises to the cytoplasm. The enzyme catalyses AMP + ATP = 2 ADP. Its pathway is purine metabolism; AMP biosynthesis via salvage pathway; AMP from ADP: step 1/1. Functionally, catalyzes the reversible transfer of the terminal phosphate group between ATP and AMP. Plays an important role in cellular energy homeostasis and in adenine nucleotide metabolism. This is Adenylate kinase from Lachnospira eligens (strain ATCC 27750 / DSM 3376 / VPI C15-48 / C15-B4) (Eubacterium eligens).